The sequence spans 127 residues: MQRTMLKSKLHRVTATHADLHYEGSCAIDEDLLEAANIKEYEQIDIWNVNNGERFTTYAIRAERGSGVISVNGSAARRAAPGDILIIATFAVYNEVELAKHEPDLIYVDTQNRIVRRGHKIPVQAAA.

S25 functions as the Schiff-base intermediate with substrate; via pyruvic acid in the catalytic mechanism. At S25 the chain carries Pyruvic acid (Ser). T57 serves as a coordination point for substrate. The active-site Proton donor is Y58. Substrate is bound at residue 73 to 75 (GSA).

The protein belongs to the PanD family. Heterooctamer of four alpha and four beta subunits. Pyruvate serves as cofactor. Post-translationally, is synthesized initially as an inactive proenzyme, which is activated by self-cleavage at a specific serine bond to produce a beta-subunit with a hydroxyl group at its C-terminus and an alpha-subunit with a pyruvoyl group at its N-terminus.

The protein localises to the cytoplasm. It catalyses the reaction L-aspartate + H(+) = beta-alanine + CO2. It functions in the pathway cofactor biosynthesis; (R)-pantothenate biosynthesis; beta-alanine from L-aspartate: step 1/1. Catalyzes the pyruvoyl-dependent decarboxylation of aspartate to produce beta-alanine. The sequence is that of Aspartate 1-decarboxylase from Dechloromonas aromatica (strain RCB).